A 99-amino-acid polypeptide reads, in one-letter code: Nucleoid-associated protein EbfC (99 aa).

The protein belongs to the YbaB/EbfC family. Homodimer. Can form tetramers and octamers in solution.

It is found in the cytoplasm. The protein resides in the nucleoid. Binds to DNA and alters its conformation. May be involved in global regulation of gene expression. Binds specifically and non-specifically to DNA, preferentially to the 4 bp broken palindrome 5'-GTnAC-3'. Affects expression of a wide variety of genes, encoding both structural and metabolic proteins. This is Nucleoid-associated protein EbfC from Borreliella burgdorferi (strain ATCC 35210 / DSM 4680 / CIP 102532 / B31) (Borrelia burgdorferi).